Reading from the N-terminus, the 89-residue chain is Small ribosomal subunit protein uS15 (89 aa).

This sequence belongs to the universal ribosomal protein uS15 family. As to quaternary structure, part of the 30S ribosomal subunit. Forms a bridge to the 50S subunit in the 70S ribosome, contacting the 23S rRNA.

One of the primary rRNA binding proteins, it binds directly to 16S rRNA where it helps nucleate assembly of the platform of the 30S subunit by binding and bridging several RNA helices of the 16S rRNA. In terms of biological role, forms an intersubunit bridge (bridge B4) with the 23S rRNA of the 50S subunit in the ribosome. In Haemophilus influenzae (strain 86-028NP), this protein is Small ribosomal subunit protein uS15.